The chain runs to 372 residues: Putative KilA-N domain-containing protein L32 (372 aa).

Positions 1–12 are enriched in basic residues; sequence MPHKAPKSKLFR. Residues 1-129 form a disordered region; the sequence is MPHKAPKSKL…SDNDKSKDNF (129 aa). Over residues 14–36 the composition is skewed to basic and acidic residues; it reads RYVEDSDDETRGRSRNRSVEKSR. Residues 37-53 are compositionally biased toward basic residues; it reads SKSLTRSKSKSPKKSRS. Over residues 79–120 the composition is skewed to acidic residues; it reads EDSEDSEDSESDQDDDKSDNEQSDSELDDSESDDDETDDNES. A KilA-N domain is found at 151-255; sequence KFAIGKFGDF…IKIGEWIEEW (105 aa).

The sequence is that of Putative KilA-N domain-containing protein L32 from Acanthamoeba polyphaga (Amoeba).